A 188-amino-acid polypeptide reads, in one-letter code: Putative pre-16S rRNA nuclease (188 aa).

A disordered region spans residues 156–188; it reads LRQGDAAPGGSDDERDEDGDTDGEDGGGDGGGE. Residues 166-188 are compositionally biased toward acidic residues; that stretch reads SDDERDEDGDTDGEDGGGDGGGE.

Belongs to the YqgF nuclease family.

It localises to the cytoplasm. Its function is as follows. Could be a nuclease involved in processing of the 5'-end of pre-16S rRNA. The protein is Putative pre-16S rRNA nuclease of Rhodospirillum centenum (strain ATCC 51521 / SW).